The chain runs to 73 residues: Protein SlyX homolog (73 aa).

Belongs to the SlyX family.

This Actinobacillus pleuropneumoniae serotype 5b (strain L20) protein is Protein SlyX homolog.